The chain runs to 173 residues: T-cell surface glycoprotein CD3 delta chain (173 aa).

Positions 1–21 (MEHSGILASLILIAVLPQGSP) are cleaved as a signal peptide. Residues 22 to 105 (FKIQVTEYED…CVELDSGTMA (84 aa)) lie on the Extracellular side of the membrane. A disulfide bond links cysteine 37 and cysteine 73. Residues asparagine 38, asparagine 55, and asparagine 74 are each glycosylated (N-linked (GlcNAc...) asparagine). Residues 106-126 (GVIFIDLIATLLLALGVYCFA) form a helical membrane-spanning segment. The Cytoplasmic portion of the chain corresponds to 127–173 (GHETGRPSGAAEVQALLKNEQLYQPLRDREDTQYSRLGGNWPRNKKS). An ITAM domain is found at 138-166 (EVQALLKNEQLYQPLRDREDTQYSRLGGN). Tyrosine 149 and tyrosine 160 each carry phosphotyrosine.

As to quaternary structure, the TCR-CD3 complex is composed of a CD3D/CD3E and a CD3G/CD3E heterodimers that preferentially associate with TCRalpha and TCRbeta, respectively, to form TCRalpha/CD3E/CD3G and TCRbeta/CD3G/CD3E trimers. In turn, the hexamer interacts with CD3Z homodimer to form the TCR-CD3 complex. Alternatively, TCRalpha and TCRbeta can be replaced by TCRgamma and TCRdelta. Interacts with coreceptors CD4 and CD8. Post-translationally, phosphorylated on Tyr residues after T-cell receptor triggering by LCK in association with CD4/CD8.

The protein localises to the membrane. Part of the TCR-CD3 complex present on T-lymphocyte cell surface that plays an essential role in adaptive immune response. When antigen presenting cells (APCs) activate T-cell receptor (TCR), TCR-mediated signals are transmitted across the cell membrane by the CD3 chains CD3D, CD3E, CD3G and CD3Z. All CD3 chains contain immunoreceptor tyrosine-based activation motifs (ITAMs) in their cytoplasmic domain. Upon TCR engagement, these motifs become phosphorylated by Src family protein tyrosine kinases LCK and FYN, resulting in the activation of downstream signaling pathways. In addition of this role of signal transduction in T-cell activation, CD3D plays an essential role in thymocyte differentiation. Indeed, participates in correct intracellular TCR-CD3 complex assembly and surface expression. In absence of a functional TCR-CD3 complex, thymocytes are unable to differentiate properly. Interacts with CD4 and CD8 and thus serves to establish a functional link between the TCR and coreceptors CD4 and CD8, which is needed for activation and positive selection of CD4 or CD8 T-cells. In Mus musculus (Mouse), this protein is T-cell surface glycoprotein CD3 delta chain (Cd3d).